The sequence spans 103 residues: Auxin-responsive protein SAUR50 (103 aa).

This sequence belongs to the ARG7 family.

Effector of hormonal and environmental signals in plant growth. Involved in heliotropism. This chain is Auxin-responsive protein SAUR50, found in Helianthus annuus (Common sunflower).